The following is a 128-amino-acid chain: Small ribosomal subunit protein uS9 (128 aa).

A compositionally biased stretch (basic and acidic residues) spans 97 to 113 (RSEGFMTRDSRSVERKK). Residues 97–128 (RSEGFMTRDSRSVERKKPGQPKARRRFQFSKR) are disordered. Over residues 114–128 (PGQPKARRRFQFSKR) the composition is skewed to basic residues.

It belongs to the universal ribosomal protein uS9 family.

This is Small ribosomal subunit protein uS9 from Phocaeicola vulgatus (strain ATCC 8482 / DSM 1447 / JCM 5826 / CCUG 4940 / NBRC 14291 / NCTC 11154) (Bacteroides vulgatus).